Reading from the N-terminus, the 229-residue chain is Urease accessory protein UreF (229 aa).

Belongs to the UreF family. As to quaternary structure, ureD, UreF and UreG form a complex that acts as a GTP-hydrolysis-dependent molecular chaperone, activating the urease apoprotein by helping to assemble the nickel containing metallocenter of UreC. The UreE protein probably delivers the nickel.

It localises to the cytoplasm. Its function is as follows. Required for maturation of urease via the functional incorporation of the urease nickel metallocenter. This chain is Urease accessory protein UreF, found in Staphylococcus epidermidis (strain ATCC 12228 / FDA PCI 1200).